The chain runs to 935 residues: Phosphoenolpyruvate carboxylase (935 aa).

Active-site residues include histidine 161 and lysine 593.

Belongs to the PEPCase type 1 family. The cofactor is Mg(2+).

The enzyme catalyses oxaloacetate + phosphate = phosphoenolpyruvate + hydrogencarbonate. In terms of biological role, forms oxaloacetate, a four-carbon dicarboxylic acid source for the tricarboxylic acid cycle. The polypeptide is Phosphoenolpyruvate carboxylase (Mycolicibacterium paratuberculosis (strain ATCC BAA-968 / K-10) (Mycobacterium paratuberculosis)).